The chain runs to 166 residues: UBA-like domain-containing protein 2 (166 aa).

A disordered region spans residues 120–166; the sequence is QQPVWLPPASPTTHLHHHHHHPQPVWPPNSQPTGGPQKAMAAMDGQR.

It belongs to the UBALD family.

The protein is UBA-like domain-containing protein 2 (ubald2) of Xenopus tropicalis (Western clawed frog).